We begin with the raw amino-acid sequence, 429 residues long: Keratin, type I cytoskeletal 20 (429 aa).

The disordered stretch occupies residues 1–26 (MDFSRRSFHRSLSSSSQGPALSTSGS). A head region spans residues 1-74 (MDFSRRSFHR…SNGGDLFGGN (74 aa)). Low complexity predominate over residues 10 to 26 (RSLSSSSQGPALSTSGS). Ser13, Ser16, and Ser26 each carry phosphoserine. The coil 1A stretch occupies residues 75–110 (EKLAMQNLNDRLASYLEKVRSLEQSNSKLEAQIKQW). The 312-residue stretch at 75–386 (EKLAMQNLND…RLLEGEDIKT (312 aa)) folds into the IF rod domain. Positions 111-128 (YETNAPSTIRDYSSYYAQ) are linker 1. The segment at 129–220 (IKELQDQIKD…KEHQEEVEVL (92 aa)) is coil 1B. Residues 221-243 (RRQLGNNVNVEVDAAPGLNLGEI) are linker 12. Residues 244-382 (MNEMRQKYEI…ATYRRLLEGE (139 aa)) form a coil 2 region. The interval 383–429 (DIKTTEYQLNTLEAKDIKKTRKIKTVVEEVVDGKVVSSEVKEIEENI) is tail.

It belongs to the intermediate filament family. Heterotetramer of two type I and two type II keratins. Associates with KRT8. Hyperphosphorylation at Ser-13 occurs during the early stages of apoptosis but becomes less prominent during the later stages. Phosphorylation at Ser-13 also increases in response to stress brought on by cell injury. In terms of processing, proteolytically cleaved by caspases during apoptosis. Cleavage occurs at Asp-233. Expressed predominantly in the intestinal epithelium in differentiated villus cells.

In terms of biological role, plays a significant role in maintaining keratin filament organization in intestinal epithelia. When phosphorylated, plays a role in the secretion of mucin in the small intestine. This Rattus norvegicus (Rat) protein is Keratin, type I cytoskeletal 20 (Krt20).